Consider the following 290-residue polypeptide: S-adenosylmethionine decarboxylase proenzyme (290 aa).

Ser-138 serves as the catalytic Schiff-base intermediate with substrate; via pyruvic acid. At Ser-138 the chain carries Pyruvic acid (Ser); by autocatalysis. His-143 serves as the catalytic Proton acceptor; for processing activity. The active-site Proton donor; for catalytic activity is the Cys-166.

Belongs to the prokaryotic AdoMetDC family. Type 2 subfamily. In terms of assembly, heterooctamer of four alpha and four beta chains arranged as a tetramer of alpha/beta heterodimers. Pyruvate serves as cofactor. Post-translationally, is synthesized initially as an inactive proenzyme. Formation of the active enzyme involves a self-maturation process in which the active site pyruvoyl group is generated from an internal serine residue via an autocatalytic post-translational modification. Two non-identical subunits are generated from the proenzyme in this reaction, and the pyruvate is formed at the N-terminus of the alpha chain, which is derived from the carboxyl end of the proenzyme. The post-translation cleavage follows an unusual pathway, termed non-hydrolytic serinolysis, in which the side chain hydroxyl group of the serine supplies its oxygen atom to form the C-terminus of the beta chain, while the remainder of the serine residue undergoes an oxidative deamination to produce ammonia and the pyruvoyl group blocking the N-terminus of the alpha chain.

It catalyses the reaction S-adenosyl-L-methionine + H(+) = S-adenosyl 3-(methylsulfanyl)propylamine + CO2. It participates in amine and polyamine biosynthesis; S-adenosylmethioninamine biosynthesis; S-adenosylmethioninamine from S-adenosyl-L-methionine: step 1/1. In terms of biological role, catalyzes the decarboxylation of S-adenosylmethionine to S-adenosylmethioninamine (dcAdoMet), the propylamine donor required for the synthesis of the polyamines spermine and spermidine from the diamine putrescine. This chain is S-adenosylmethionine decarboxylase proenzyme, found in Heliobacterium modesticaldum (strain ATCC 51547 / Ice1).